We begin with the raw amino-acid sequence, 546 residues long: Chaperonin GroEL 2 (546 aa).

Residues 30–33, lysine 51, 87–91, glycine 415, 479–481, and aspartate 495 contribute to the ATP site; these read TLGP, DGTTT, and NAA. Residues 526 to 546 form a disordered region; the sequence is KEDAPMPGGMPGGMGGMGMDM. Residues 534–546 show a composition bias toward gly residues; it reads GMPGGMGGMGMDM.

Belongs to the chaperonin (HSP60) family. In terms of assembly, forms a cylinder of 14 subunits composed of two heptameric rings stacked back-to-back. Interacts with the co-chaperonin GroES.

Its subcellular location is the cytoplasm. The enzyme catalyses ATP + H2O + a folded polypeptide = ADP + phosphate + an unfolded polypeptide.. Together with its co-chaperonin GroES, plays an essential role in assisting protein folding. The GroEL-GroES system forms a nano-cage that allows encapsulation of the non-native substrate proteins and provides a physical environment optimized to promote and accelerate protein folding. The protein is Chaperonin GroEL 2 of Burkholderia lata (strain ATCC 17760 / DSM 23089 / LMG 22485 / NCIMB 9086 / R18194 / 383).